The following is a 187-amino-acid chain: MTYDIASAVIIIPLWFSRTMDVPTTKASDSIPLPPNPATTLPLIRVAIEFERAEIKDPISNTITEIIKHSFVPSISAKRPHNNMKTALERAYPVTNQPILPKSWNLMPIVSYKVTTITISKAARKRVNRSDITHKVKLKVLFIAYMSDGEAYVLYKQMSMIMRFKLLFKVVPRCHFFLRSAAVYQPF.

This is an uncharacterized protein from Saccharomyces cerevisiae (strain ATCC 204508 / S288c) (Baker's yeast).